Reading from the N-terminus, the 207-residue chain is Small ribosomal subunit protein uS4 (207 aa).

The segment covering 29–38 (SDKAKFDSKP) has biased composition (basic and acidic residues). The disordered stretch occupies residues 29 to 54 (SDKAKFDSKPGQHGRTSGTRTSDYGL). The span at 42 to 52 (GRTSGTRTSDY) shows a compositional bias: polar residues. The region spanning 97 to 160 (SRLDNVVYRM…KKQTRIAEAL (64 aa)) is the S4 RNA-binding domain.

It belongs to the universal ribosomal protein uS4 family. In terms of assembly, part of the 30S ribosomal subunit. Contacts protein S5. The interaction surface between S4 and S5 is involved in control of translational fidelity.

Its function is as follows. One of the primary rRNA binding proteins, it binds directly to 16S rRNA where it nucleates assembly of the body of the 30S subunit. Functionally, with S5 and S12 plays an important role in translational accuracy. This Polaromonas naphthalenivorans (strain CJ2) protein is Small ribosomal subunit protein uS4.